The sequence spans 266 residues: Proteasome subunit alpha type-1 (266 aa).

Residues 235–266 (DGFKTRPEDIPAVADNEEDDDELHEQPPDVEE) are disordered. Acidic residues predominate over residues 249–266 (DNEEDDDELHEQPPDVEE).

The protein belongs to the peptidase T1A family. As to quaternary structure, the 26S proteasome consists of a 20S proteasome core and two 19S regulatory subunits. The 20S proteasome core is composed of 28 subunits that are arranged in four stacked rings, resulting in a barrel-shaped structure. The two end rings are each formed by seven alpha subunits, and the two central rings are each formed by seven beta subunits. The catalytic chamber with the active sites is on the inside of the barrel.

The protein resides in the cytoplasm. Its subcellular location is the nucleus. Functionally, the proteasome is a multicatalytic proteinase complex which is characterized by its ability to cleave peptides with Arg, Phe, Tyr, Leu, and Glu adjacent to the leaving group at neutral or slightly basic pH. The proteasome has an ATP-dependent proteolytic activity. This chain is Proteasome subunit alpha type-1, found in Trypanosoma brucei rhodesiense.